The sequence spans 842 residues: Elongation factor 2 (842 aa).

Residues 17-346 (TNVRNMSVIA…MIVLHLPSPV (330 aa)) form the tr-type G domain. Residues 26–33 (AHVDHGKS), 158–161 (NKVD), and 213–215 (SGL) contribute to the GTP site. His-699 is subject to Diphthamide.

Belongs to the TRAFAC class translation factor GTPase superfamily. Classic translation factor GTPase family. EF-G/EF-2 subfamily.

The protein resides in the cytoplasm. It carries out the reaction GTP + H2O = GDP + phosphate + H(+). Catalyzes the GTP-dependent ribosomal translocation step during translation elongation. During this step, the ribosome changes from the pre-translocational (PRE) to the post-translocational (POST) state as the newly formed A-site-bound peptidyl-tRNA and P-site-bound deacylated tRNA move to the P and E sites, respectively. Catalyzes the coordinated movement of the two tRNA molecules, the mRNA and conformational changes in the ribosome. This chain is Elongation factor 2 (EFT2), found in Candida albicans (strain SC5314 / ATCC MYA-2876) (Yeast).